We begin with the raw amino-acid sequence, 103 residues long: Histone H4 (103 aa).

A compositionally biased stretch (gly residues) spans 1–14 (MSGRGKGGKGLGKG). The tract at residues 1 to 20 (MSGRGKGGKGLGKGGAKRHR) is disordered. Residues 17–21 (KRHRK) mediate DNA binding.

The protein belongs to the histone H4 family. In terms of assembly, the nucleosome is a histone octamer containing two molecules each of H2A, H2B, H3 and H4 assembled in one H3-H4 heterotetramer and two H2A-H2B heterodimers. The octamer wraps approximately 147 bp of DNA.

It localises to the nucleus. The protein resides in the chromosome. Its function is as follows. Core component of nucleosome. Nucleosomes wrap and compact DNA into chromatin, limiting DNA accessibility to the cellular machineries which require DNA as a template. Histones thereby play a central role in transcription regulation, DNA repair, DNA replication and chromosomal stability. DNA accessibility is regulated via a complex set of post-translational modifications of histones, also called histone code, and nucleosome remodeling. The polypeptide is Histone H4 (Eimeria tenella (Coccidian parasite)).